A 313-amino-acid polypeptide reads, in one-letter code: Probable cytochrome c oxidase subunit 2 (313 aa).

In terms of domain architecture, RPE1 insert spans Arg-5–Tyr-51. Helical transmembrane passes span Tyr-39–Ile-59, Leu-94–Ile-114, and Leu-131–Pro-151. Cu cation-binding residues include His-233, Cys-268, Cys-272, and His-276.

The protein belongs to the cytochrome c oxidase subunit 2 family. The cofactor is Cu cation. Requires heme as cofactor.

It is found in the cell membrane. It carries out the reaction 4 Fe(II)-[cytochrome c] + O2 + 8 H(+)(in) = 4 Fe(III)-[cytochrome c] + 2 H2O + 4 H(+)(out). Subunits I and II form the functional core of the enzyme complex. Electrons originating in cytochrome c are transferred via heme a and Cu(A) to the binuclear center formed by heme a3 and Cu(B). The protein is Probable cytochrome c oxidase subunit 2 (ctaC) of Rickettsia prowazekii (strain Madrid E).